Reading from the N-terminus, the 139-residue chain is Holo-[acyl-carrier-protein] synthase (139 aa).

2 residues coordinate Mg(2+): Asp8 and Glu61.

This sequence belongs to the P-Pant transferase superfamily. AcpS family. Mg(2+) is required as a cofactor.

The protein resides in the cytoplasm. The enzyme catalyses apo-[ACP] + CoA = holo-[ACP] + adenosine 3',5'-bisphosphate + H(+). Transfers the 4'-phosphopantetheine moiety from coenzyme A to a Ser of acyl-carrier-protein. The chain is Holo-[acyl-carrier-protein] synthase from Rhodopseudomonas palustris (strain BisB5).